The following is a 434-amino-acid chain: Potassium/proton antiporter CemA (434 aa).

The next 5 membrane-spanning stretches (helical) occupy residues 75–95 (LLEYKLSLWLIQLFLIFSLFF), 210–230 (LASLQYIGCLFFIPLGVSFFF), 311–331 (IVLHLLTDLIWFITLSCLFIL), 359–379 (ILLLTDLCIGFHSPHGWEIVI), and 395–415 (ISCFVSTFPVILDTVFKYLIF).

The protein belongs to the CemA family.

It localises to the plastid. The protein localises to the chloroplast inner membrane. The enzyme catalyses K(+)(in) + H(+)(out) = K(+)(out) + H(+)(in). Functionally, contributes to K(+)/H(+) antiport activity by supporting proton efflux to control proton extrusion and homeostasis in chloroplasts in a light-dependent manner to modulate photosynthesis. Prevents excessive induction of non-photochemical quenching (NPQ) under continuous-light conditions. Indirectly promotes efficient inorganic carbon uptake into chloroplasts. The sequence is that of Potassium/proton antiporter CemA from Marchantia polymorpha (Common liverwort).